A 238-amino-acid chain; its full sequence is Acyl-protein thioesterase 1 (238 aa).

Active-site charge relay system residues include serine 120, aspartate 174, and histidine 219.

It belongs to the AB hydrolase superfamily. AB hydrolase 2 family.

The protein localises to the cytoplasm. The protein resides in the nucleus. It catalyses the reaction S-hexadecanoyl-L-cysteinyl-[protein] + H2O = L-cysteinyl-[protein] + hexadecanoate + H(+). Its function is as follows. Hydrolyzes fatty acids from S-acylated cysteine residues in proteins with a strong preference for palmitoylated G-alpha proteins over other acyl substrates. Mediates the deacylation of G-alpha proteins such as GPA1 in vivo, but has weak or no activity toward palmitoylated Ras proteins. Has weak lysophospholipase activity in vitro; however such activity may not exist in vivo. This chain is Acyl-protein thioesterase 1, found in Cryptococcus neoformans var. neoformans serotype D (strain B-3501A) (Filobasidiella neoformans).